Here is a 330-residue protein sequence, read N- to C-terminus: Complement factor H-related protein 3 (330 aa).

A signal peptide spans 1 to 18 (MLLLINVILTLWVSCANG). Sushi domains follow at residues 22–84 (PCDF…VPCL), 85–142 (RKCY…RCIR), 144–205 (RTCS…ICIN), 208–266 (EKCG…RCIH), and 267–330 (PCII…PRCE). Intrachain disulfides connect cysteine 23-cysteine 72, cysteine 55-cysteine 83, cysteine 87-cysteine 129, cysteine 114-cysteine 140, cysteine 146-cysteine 192, and cysteine 175-cysteine 203. A glycan (N-linked (GlcNAc...) asparagine) is linked at asparagine 108. N-linked (GlcNAc...) asparagine glycans are attached at residues asparagine 185 and asparagine 205. Disulfide bonds link cysteine 210-cysteine 253, cysteine 239-cysteine 264, cysteine 268-cysteine 319, and cysteine 302-cysteine 329. A glycan (N-linked (GlcNAc...) asparagine) is linked at asparagine 309.

Expressed by the liver and secreted in plasma.

It is found in the secreted. In terms of biological role, might be involved in complement regulation. This is Complement factor H-related protein 3 (CFHR3) from Homo sapiens (Human).